Here is a 1162-residue protein sequence, read N- to C-terminus: MEEVRCPEHGTFCFLKTGVRDGPNKGKSFYVCRADTCSFVRATDIPVSHCLLHEDFVVELQGLLLPQDKKEYRLFFRCIRSKAEGKRWCGSIPWQDPDSKEHSVSNKSQHASETFHHSSNWLRNPFKVLDKNQEPALWKQLIKGEGEEKKADKKQREKGDQLFDQKKEQKPEMMEKDLSSGLVPKKKQSVVQEKKQEEGAEIQCEAETGGTHKRDFSEIKSQQCQGNELTRPSASSQEKSSGKSQDVQRESEPLREKVTQLLPQNVHSHNSISKPQKGGPLNKEYTNWEAKETKAKDGPSIQATQKSLPQGHFQERPETHSVPAPGGPAAQAAPAAPGLSLGEGREAATSSDDEEEDDVVFVSSKPGSPLLFDSTLDLETKENLQFPDRSVQRKVSPASGVSKKVEPSDPVARRVYLTTQLKQKKSTLASVNIQALPDKGQKLIKQIQELEEVLSGLTLSPEQGTNEKSNSQVPQQSHFTKTTTGPPHLVPPQPLPRRGTQPVGSLELKSACQVTAGGSSQCYRGHTNQDHVHAVWKITSEAIGQLHRSLESCPGETVVAEDPAGLKVPLLLHQKQALAWLLWRESQKPQGGILADDMGLGKTLTMIALILTQKNQEKKEEKEKSTALTWLSKDDSCDFTSHGTLIICPASLIHHWKNEVEKRVNSNKLRVYLYHGPNRDSRARVLSTYDIVITTYSLVAKEIPTNKQEAEIPGANLNVEGTSTPLLRIAWARIILDEAHNVKNPRVQTSIAVCKLQACARWAVTGTPIQNNLLDMYSLLKFLRCSPFDEFNLWRSQVDNGSKKGGERLSILTKSLLLRRTKDQLDSTGRPLVILPQRKFQLHHLKLSEDEETVYNVFFARSRSALQSYLKRHESRGNQSGRSPNNPFSRVALEFGSEEPRHSEAADSPRSSTVHILSQLLRLRQCCCHLSLLKSALDPMELKGEGLVLSLEEQLSALTLSELRDSEPSSTVSLNGTFFKMELFEGMRESTKISSLLAELEAIQRNSASQKSVIVSQWTNMLKVVALHLKKHGLTYATIDGSVNPKQRMDLVEAFNHSRGPQVMLISLLAGGVGLNLTGGNHLFLLDMHWNPSLEDQACDRIYRVGQQKDVVIHRFVCEGTVEEKILQLQEKKKDLAKQVLSGSGESVTKLTLADLRVLFGI.

4 residues coordinate Zn(2+): Cys6, His9, Cys32, and Cys37. Residues 6–46 (CPEHGTFCFLKTGVRDGPNKGKSFYVCRADTCSFVRATDIP) form a GRF-type zinc finger. Disordered stretches follow at residues 97–116 (PDSK…ETFH), 142–358 (IKGE…EEDD), 388–407 (DRSV…KVEP), and 459–503 (LSPE…TQPV). The segment covering 105 to 116 (SNKSQHASETFH) has biased composition (polar residues). The span at 142 to 178 (IKGEGEEKKADKKQREKGDQLFDQKKEQKPEMMEKDL) shows a compositional bias: basic and acidic residues. A Glycyl lysine isopeptide (Lys-Gly) (interchain with G-Cter in SUMO2) cross-link involves residue Lys143. Polar residues predominate over residues 219-232 (IKSQQCQGNELTRP). Positions 233–245 (SASSQEKSSGKSQ) are enriched in low complexity. Basic and acidic residues predominate over residues 246 to 258 (DVQRESEPLREKV). The span at 261–274 (LLPQNVHSHNSISK) shows a compositional bias: polar residues. A compositionally biased stretch (low complexity) spans 323-338 (PAPGGPAAQAAPAAPG). A compositionally biased stretch (polar residues) spans 459-485 (LSPEQGTNEKSNSQVPQQSHFTKTTTG). Ser460 bears the Phosphoserine mark. The 204-residue stretch at 583–786 (WRESQKPQGG…YSLLKFLRCS (204 aa)) folds into the Helicase ATP-binding domain. 596-603 (DDMGLGKT) lines the ATP pocket. Residues 737–740 (DEAH) carry the DEAH box motif. The tract at residues 871–890 (KRHESRGNQSGRSPNNPFSR) is disordered. Polar residues predominate over residues 877–888 (GNQSGRSPNNPF). A phosphoserine mark is found at Ser883 and Ser908. The 163-residue stretch at 995–1157 (SLLAELEAIQ…VTKLTLADLR (163 aa)) folds into the Helicase C-terminal domain.

Belongs to the SNF2/RAD54 helicase family. As to quaternary structure, interacts with CDC5L. Part of the spliceosome.

It localises to the cytoplasm. Its subcellular location is the nucleus. Its function is as follows. DsDNA-dependent ATPase which acts as a transcription termination factor by coupling ATP hydrolysis with removal of RNA polymerase II from the DNA template. May contribute to mitotic transcription repression. May also be involved in pre-mRNA splicing. The sequence is that of Transcription termination factor 2 (TTF2) from Homo sapiens (Human).